The following is a 101-amino-acid chain: Small ribosomal subunit protein bS18c (101 aa).

A disordered region spans residues 82–101 (KQFERAESTPRTPGPRTRNK).

Belongs to the bacterial ribosomal protein bS18 family. Part of the 30S ribosomal subunit.

The protein localises to the plastid. Its subcellular location is the chloroplast. This chain is Small ribosomal subunit protein bS18c, found in Platanus occidentalis (Sycamore).